Reading from the N-terminus, the 747-residue chain is Rho GTPase-activating protein 24 (747 aa).

2 disordered regions span residues 1–20 and 327–475; these read MEER…KNTK and FPKD…GTHS. One can recognise a PH domain in the interval 17 to 123; that stretch reads KNTKCGWLRK…WVKSIRRVIW (107 aa). The Rho-GAP domain maps to 133–327; that stretch reads QKLEDTVRYE…VMISKHDRLF (195 aa). Composition is skewed to polar residues over residues 334-346 and 355-367; these read QSKP…SNNN and GQLQ…NTKE. Residues Ser368, Ser390, Ser395, Ser397, Ser401, Ser412, Ser414, and Ser436 each carry the phosphoserine modification. Positions 368–380 are enriched in basic and acidic residues; that stretch reads SPVRRCSWDKPES. The segment covering 381 to 404 has biased composition (polar residues); it reads PQRSSVDNGSPTALSGSKTNSPRN. Positions 431-475 are enriched in polar residues; sequence IVTNGSFSSSNAEGVEKPQTTPNGSLQARRTSSLKSSGTKMGTHS. Thr451 carries the post-translational modification Phosphothreonine. Ser494 bears the Phosphoserine mark. The segment at 581–639 is disordered; it reads DFYVGNFEDPVLDGPPQDDLSHPGDYENKSDRRSVGGRSSRATSSSDNSETFVGNTSSN. Residues 599 to 614 are compositionally biased toward basic and acidic residues; sequence DLSHPGDYENKSDRRS. The segment covering 616–629 has biased composition (low complexity); the sequence is GGRSSRATSSSDNS. A compositionally biased stretch (polar residues) spans 630-639; that stretch reads ETFVGNTSSN. Residues 648–728 adopt a coiled-coil conformation; it reads SSLKQEMTKQ…KEMEQFFSTF (81 aa).

As to quaternary structure, interacts with FLNA. In terms of processing, phosphorylated by ROCK, leading to activate the RacGAP activity.

The protein resides in the cytoplasm. The protein localises to the cytoskeleton. It localises to the cell junction. It is found in the adherens junction. Its subcellular location is the focal adhesion. The protein resides in the cell projection. Its function is as follows. Rho GTPase-activating protein involved in cell polarity, cell morphology and cytoskeletal organization. Acts as a GTPase activator for the Rac-type GTPase by converting it to an inactive GDP-bound state. Controls actin remodeling by inactivating Rac downstream of Rho leading to suppress leading edge protrusion and promotes cell retraction to achieve cellular polarity. Able to suppress RAC1 and CDC42 activity in vitro. Overexpression induces cell rounding with partial or complete disruption of actin stress fibers and formation of membrane ruffles, lamellipodia, and filopodia. Isoform 2 is a vascular cell-specific GAP involved in modulation of angiogenesis. The sequence is that of Rho GTPase-activating protein 24 (Arhgap24) from Mus musculus (Mouse).